Consider the following 222-residue polypeptide: MSVRHSGIGMTSLRTRVRMVERLREQGIKDEVVLAAMGFIPRHLFVEAALASRAYEDVALPINYGQTISSPWIVGRMTELLRNGGSNSLRKILEIGTGCGYQTAVLAKIASEVYSIERIGPLLTRTRIRLRELGILNIHLKHADGMRGLPEAGLFDGIMMTAVIPEIPETLLEQLAMGGRMVFPKGNRKQYLCVIDHTTEGFVETILDEVMFVPILPGTINR.

Residue S69 is part of the active site.

It belongs to the methyltransferase superfamily. L-isoaspartyl/D-aspartyl protein methyltransferase family.

The protein localises to the cytoplasm. The catalysed reaction is [protein]-L-isoaspartate + S-adenosyl-L-methionine = [protein]-L-isoaspartate alpha-methyl ester + S-adenosyl-L-homocysteine. Its function is as follows. Catalyzes the methyl esterification of L-isoaspartyl residues in peptides and proteins that result from spontaneous decomposition of normal L-aspartyl and L-asparaginyl residues. It plays a role in the repair and/or degradation of damaged proteins. The chain is Protein-L-isoaspartate O-methyltransferase from Nitrosomonas europaea (strain ATCC 19718 / CIP 103999 / KCTC 2705 / NBRC 14298).